The following is a 285-amino-acid chain: Steroidogenic acute regulatory protein, mitochondrial (285 aa).

Residues 1–63 constitute a mitochondrion transit peptide; the sequence is MLLATFKLCA…RRSSLLGSRL (63 aa). A phosphoserine; by PKA mark is found at Ser-57 and Ser-195. The 214-residue stretch at 67–280 folds into the START domain; the sequence is LYSDQELAYL…LRKRLESHPA (214 aa).

May interact with TSPO. As to expression, expressed in gonads, adrenal cortex and kidney.

The protein resides in the mitochondrion. The catalysed reaction is cholesterol(in) = cholesterol(out). It functions in the pathway steroid metabolism; cholesterol metabolism. Its function is as follows. Plays a key role in steroid hormone synthesis by enhancing the metabolism of cholesterol into pregnenolone. Mediates the transfer of cholesterol from the outer mitochondrial membrane to the inner mitochondrial membrane where it is cleaved to pregnenolone. In Homo sapiens (Human), this protein is Steroidogenic acute regulatory protein, mitochondrial (STAR).